The following is a 356-amino-acid chain: Fructose-1,6-bisphosphatase class 1 (356 aa).

Mg(2+) is bound by residues E91, D113, L115, and D116. Residues 116 to 119 (DGSS) and N208 each bind substrate. E280 is a Mg(2+) binding site.

The protein belongs to the FBPase class 1 family. In terms of assembly, homotetramer. Mg(2+) is required as a cofactor.

The protein localises to the cytoplasm. The enzyme catalyses beta-D-fructose 1,6-bisphosphate + H2O = beta-D-fructose 6-phosphate + phosphate. It functions in the pathway carbohydrate biosynthesis; gluconeogenesis. This chain is Fructose-1,6-bisphosphatase class 1, found in Methylacidiphilum infernorum (isolate V4) (Methylokorus infernorum (strain V4)).